A 287-amino-acid chain; its full sequence is Casein kinase II subunit beta-1 (287 aa).

The segment at 1-97 is disordered; the sequence is MYRDRGTVNS…ESDVSGSDGE (97 aa). The segment covering 13 to 25 has biased composition (basic and acidic residues); that stretch reads EVVDRKRINDALE. The segment covering 41-50 has biased composition (low complexity); it reads GTVTAATTTA. Residues 78-97 show a composition bias toward acidic residues; it reads SDDESDTDSEESDVSGSDGE.

This sequence belongs to the casein kinase 2 subunit beta family. As to quaternary structure, heterotetramer of two catalytic alpha subunits and two regulatory beta subunits. Interacts with CCA1. Interacts with LHY. In terms of processing, phosphorylated by alpha subunit.

Its subcellular location is the cytoplasm. It localises to the cytosol. The protein localises to the nucleus. In terms of biological role, plays a complex role in regulating the basal catalytic activity of the alpha subunit. The tetrameric holoenzyme CK2, composed of two alpha and two beta subunits, phosphorylates the transcription factor GBFl, resulting in stimulation of its DNA binding activity. CK2 phosphorylates the transcription factor PIF1 after an exposure to light, resulting in a proteasome-dependent degradation of PIF1 and promotion of photomorphogenesis. CK2 phosphorylates translation initiation factors. May participate in the regulation of the initiation of translation. Stimulates the binding of CCA1 to promoters. The protein is Casein kinase II subunit beta-1 (CKB1) of Arabidopsis thaliana (Mouse-ear cress).